A 501-amino-acid polypeptide reads, in one-letter code: Glycoprotein 3-alpha-L-fucosyltransferase A (501 aa).

Over 1-39 (MGVFSNLRGPKIGLTHEELPVVANGSTSSSSSPSSFKRK) the chain is Cytoplasmic. The helical; Signal-anchor for type II membrane protein transmembrane segment at 40–60 (VSTFLPICVALVVIIEIGFLC) threads the bilayer. Residues 61 to 501 (RLDNASLVDT…PCPKFEVVFV (441 aa)) are Lumenal-facing. N-linked (GlcNAc...) asparagine glycans are attached at residues N64, N337, N420, and N481.

This sequence belongs to the glycosyltransferase 10 family. Mg(2+) is required as a cofactor. It depends on Mn(2+) as a cofactor. In terms of processing, glycosylation may be important for enzymatic activity.

The protein localises to the golgi apparatus. It localises to the golgi stack membrane. It carries out the reaction N(4)-{beta-D-GlcNAc-(1-&gt;2)-alpha-D-Man-(1-&gt;3)-[beta-D-GlcNAc-(1-&gt;2)-alpha-D-Man-(1-&gt;6)]-beta-D-Man-(1-&gt;4)-beta-D-GlcNAc-(1-&gt;4)-beta-D-GlcNAc}-L-asparaginyl-[protein] + GDP-beta-L-fucose = N(4)-{beta-D-GlcNAc-(1-&gt;2)-alpha-D-Man-(1-&gt;3)-[beta-D-GlcNAc-(1-&gt;2)-alpha-D-Man-(1-&gt;6)]-beta-D-Man-(1-&gt;4)-beta-D-GlcNAc-(1-&gt;4)-[alpha-L-Fuc(1-&gt;3)]-beta-D-GlcNAc}-L-asparaginyl-[protein] + GDP + H(+). It participates in protein modification; protein glycosylation. With respect to regulation, inhibited by Cu(2+) and Zn(2+). Involved in cell wall synthesis. Preferentially catalyzes the addition of fucose in alpha 1-3 linkage to the first GlcNAc residue next to the peptide chains in N-glycans. This is Glycoprotein 3-alpha-L-fucosyltransferase A (FUT11) from Arabidopsis thaliana (Mouse-ear cress).